The following is a 324-amino-acid chain: Elongation factor P--(R)-beta-lysine ligase (324 aa).

Serine 75–glutamate 77 contacts substrate. Residues arginine 99 to lysine 101 and asparagine 108 contribute to the ATP site. Tyrosine 117 serves as a coordination point for substrate. Glutamate 243 to leucine 244 lines the ATP pocket. Position 250 (glutamate 250) interacts with substrate. Residue glycine 299 participates in ATP binding.

It belongs to the class-II aminoacyl-tRNA synthetase family. EpmA subfamily. In terms of assembly, homodimer.

It carries out the reaction D-beta-lysine + L-lysyl-[protein] + ATP = N(6)-((3R)-3,6-diaminohexanoyl)-L-lysyl-[protein] + AMP + diphosphate + H(+). With EpmB is involved in the beta-lysylation step of the post-translational modification of translation elongation factor P (EF-P). Catalyzes the ATP-dependent activation of (R)-beta-lysine produced by EpmB, forming a lysyl-adenylate, from which the beta-lysyl moiety is then transferred to the epsilon-amino group of a conserved specific lysine residue in EF-P. This Buchnera aphidicola subsp. Acyrthosiphon pisum (strain 5A) protein is Elongation factor P--(R)-beta-lysine ligase.